Reading from the N-terminus, the 556-residue chain is Formate--tetrahydrofolate ligase 1 (556 aa).

Residue T65–S72 coordinates ATP.

This sequence belongs to the formate--tetrahydrofolate ligase family.

It carries out the reaction (6S)-5,6,7,8-tetrahydrofolate + formate + ATP = (6R)-10-formyltetrahydrofolate + ADP + phosphate. The protein operates within one-carbon metabolism; tetrahydrofolate interconversion. This chain is Formate--tetrahydrofolate ligase 1, found in Streptococcus pyogenes serotype M1.